Reading from the N-terminus, the 238-residue chain is Ribonuclease PH (238 aa).

Phosphate is bound by residues Arg86 and Gly124 to Arg126.

Belongs to the RNase PH family. As to quaternary structure, homohexameric ring arranged as a trimer of dimers.

It catalyses the reaction tRNA(n+1) + phosphate = tRNA(n) + a ribonucleoside 5'-diphosphate. Functionally, phosphorolytic 3'-5' exoribonuclease that plays an important role in tRNA 3'-end maturation. Removes nucleotide residues following the 3'-CCA terminus of tRNAs; can also add nucleotides to the ends of RNA molecules by using nucleoside diphosphates as substrates, but this may not be physiologically important. Probably plays a role in initiation of 16S rRNA degradation (leading to ribosome degradation) during starvation. This is Ribonuclease PH from Erwinia tasmaniensis (strain DSM 17950 / CFBP 7177 / CIP 109463 / NCPPB 4357 / Et1/99).